We begin with the raw amino-acid sequence, 552 residues long: C-type lectin receptor-like tyrosine-protein kinase At1g52310 (552 aa).

The N-terminal stretch at 1-27 (MELKWVSCRKQSLFLISCLALLCLASL) is a signal peptide. Over 28–201 (DTISCESTQN…DIKCRNCHKY (174 aa)) the chain is Extracellular. N-linked (GlcNAc...) asparagine glycosylation is found at Asn-37, Asn-59, Asn-69, Asn-106, Asn-118, Asn-137, Asn-154, Asn-169, and Asn-180. The C-type lectin domain maps to 59–188 (NQTKCYAYFK…CNASHAFVCA (130 aa)). Intrachain disulfides connect Cys-80–Cys-187 and Cys-164–Cys-179. Residues 202-222 (LVILAVVSGLILFTTFAIILW) form a helical membrane-spanning segment. Over 223 to 552 (LLVYKRSKKR…QQLVQPLEVK (330 aa)) the chain is Cytoplasmic. A Protein kinase domain is found at 268–546 (SEANRLAGDA…HVVHQLQQLV (279 aa)). Residues 274-282 (AGDAKTGGT) and Lys-296 contribute to the ATP site. Asp-394 serves as the catalytic Proton acceptor.

This sequence belongs to the protein kinase superfamily. Tyr protein kinase family.

It is found in the cell membrane. The enzyme catalyses L-tyrosyl-[protein] + ATP = O-phospho-L-tyrosyl-[protein] + ADP + H(+). In Arabidopsis thaliana (Mouse-ear cress), this protein is C-type lectin receptor-like tyrosine-protein kinase At1g52310.